We begin with the raw amino-acid sequence, 170 residues long: Protein HemX (170 aa).

Over residues 1-17 the composition is skewed to polar residues; that stretch reads MTEQKNTNENDLQNGTS. The disordered stretch occupies residues 1–24; the sequence is MTEQKNTNENDLQNGTSKADDDIR. Residues 37-57 traverse the membrane as a helical segment; the sequence is GLIGSAVAILVILAIGGGLYY.

The protein localises to the cell membrane. This Proteus mirabilis protein is Protein HemX.